The primary structure comprises 258 residues: MLAKRIIPCLDVRDGQVVKGVQFRNHEIIGDIVPLAKRYADEGADELVFYDITASSDGRVVDKSWVARVAEVIDIPFCVAGGIRSIDDAAKILSFGADKISINSPALADSTLITRLADRFGVQCIVVGIDTWFDDATGKYHVNQYTGDENRTRVTQWETLDWVQEVQQRGAGEIVLNMMNQDGVRNGYDLTQLKKVRDVCRVPLIASGGAGTMEHFLEAFRDADVDGALAASVFHKQIINIGELKAYLAGQGVEIRIC.

Active-site residues include D11 and D130.

Belongs to the HisA/HisF family. Heterodimer of HisH and HisF.

The protein resides in the cytoplasm. It catalyses the reaction 5-[(5-phospho-1-deoxy-D-ribulos-1-ylimino)methylamino]-1-(5-phospho-beta-D-ribosyl)imidazole-4-carboxamide + L-glutamine = D-erythro-1-(imidazol-4-yl)glycerol 3-phosphate + 5-amino-1-(5-phospho-beta-D-ribosyl)imidazole-4-carboxamide + L-glutamate + H(+). It functions in the pathway amino-acid biosynthesis; L-histidine biosynthesis; L-histidine from 5-phospho-alpha-D-ribose 1-diphosphate: step 5/9. Its function is as follows. IGPS catalyzes the conversion of PRFAR and glutamine to IGP, AICAR and glutamate. The HisF subunit catalyzes the cyclization activity that produces IGP and AICAR from PRFAR using the ammonia provided by the HisH subunit. The protein is Imidazole glycerol phosphate synthase subunit HisF of Salmonella agona (strain SL483).